Here is a 229-residue protein sequence, read N- to C-terminus: Potassium/proton antiporter CemA (229 aa).

Helical transmembrane passes span 7–27 (FTPLFYLSFIVFLPWWISFSF), 114–134 (LICFVILSGYSIWGNENLVIL), and 189–209 (ILSGLVSTFPVILDTILKYWI).

It belongs to the CemA family.

It is found in the plastid. It localises to the chloroplast inner membrane. It carries out the reaction K(+)(in) + H(+)(out) = K(+)(out) + H(+)(in). Functionally, contributes to K(+)/H(+) antiport activity by supporting proton efflux to control proton extrusion and homeostasis in chloroplasts in a light-dependent manner to modulate photosynthesis. Prevents excessive induction of non-photochemical quenching (NPQ) under continuous-light conditions. Indirectly promotes efficient inorganic carbon uptake into chloroplasts. This Ipomoea purpurea (Common morning glory) protein is Potassium/proton antiporter CemA.